The primary structure comprises 341 residues: NADH-quinone oxidoreductase subunit H 2 (341 aa).

Transmembrane regions (helical) follow at residues 13–33 (IVVI…IAYI), 82–102 (GVFL…WAVI), 115–135 (VGVL…IMAG), 161–181 (IGFV…TAIV), 190–210 (VLGW…VSAL), 242–262 (LFVL…TILF), 277–297 (WVPG…MFAM), and 317–337 (VFLP…QFAG).

The protein belongs to the complex I subunit 1 family. As to quaternary structure, NDH-1 is composed of 14 different subunits. Subunits NuoA, H, J, K, L, M, N constitute the membrane sector of the complex.

The protein resides in the cell inner membrane. The enzyme catalyses a quinone + NADH + 5 H(+)(in) = a quinol + NAD(+) + 4 H(+)(out). Functionally, NDH-1 shuttles electrons from NADH, via FMN and iron-sulfur (Fe-S) centers, to quinones in the respiratory chain. The immediate electron acceptor for the enzyme in this species is believed to be ubiquinone. Couples the redox reaction to proton translocation (for every two electrons transferred, four hydrogen ions are translocated across the cytoplasmic membrane), and thus conserves the redox energy in a proton gradient. This subunit may bind ubiquinone. This chain is NADH-quinone oxidoreductase subunit H 2, found in Rhodopseudomonas palustris (strain HaA2).